A 560-amino-acid polypeptide reads, in one-letter code: MFS-type transporter pgmG (560 aa).

The disordered stretch occupies residues 1–32 (MSETVTQTETDQRPATARSLGAEEKEAKSDEQ). Residues 21-31 (GAEEKEAKSDE) show a composition bias toward basic and acidic residues. 8 helical membrane-spanning segments follow: residues 45 to 65 (FIVI…NTIV), 84 to 104 (WLSV…SKIY), 111 to 131 (WLYL…GAAP), 141 to 161 (ALAG…LSVN), 174 to 194 (TGLT…GFAV), 201 to 221 (WSFY…LFML), 242 to 262 (LGTI…NFGG), and 275 to 295 (CFVV…YCIG). A glycan (N-linked (GlcNAc...) asparagine) is linked at N300. A helical transmembrane segment spans residues 313–333 (FIILFVQTASVATVFFVPIYF). N343 carries an N-linked (GlcNAc...) asparagine glycan. Transmembrane regions (helical) follow at residues 346-366 (AIDA…AMIL), 378-398 (MPWY…MYTI), 409-429 (GYMI…FAVA), 440-460 (VATG…LAIA), and 515-535 (ISQV…LAIF).

Belongs to the major facilitator superfamily. TCR/Tet family.

Its subcellular location is the membrane. MFS-type transporter; part of the gene cluster that mediates the biosynthesis of pleosporalin A, ascomycone A, as well as a third cryptic naphthoquinone derived pigment, all responsible for the coloration of conidia. Seems not to be involved in pigment biosynthesis although its expression is regulated by the cluster-specific transcription factor pgmR. The protein is MFS-type transporter pgmG of Aspergillus terreus.